Consider the following 234-residue polypeptide: Octanoyltransferase (234 aa).

The BPL/LPL catalytic domain occupies 42–226; sequence PDTPDEFWVV…ELASLIGYET (185 aa). Substrate contacts are provided by residues 81-88, 157-159, and 170-172; these read RGGQVTYH, SLG, and GLA. C188 functions as the Acyl-thioester intermediate in the catalytic mechanism.

It belongs to the LipB family.

The protein localises to the cytoplasm. It catalyses the reaction octanoyl-[ACP] + L-lysyl-[protein] = N(6)-octanoyl-L-lysyl-[protein] + holo-[ACP] + H(+). It functions in the pathway protein modification; protein lipoylation via endogenous pathway; protein N(6)-(lipoyl)lysine from octanoyl-[acyl-carrier-protein]: step 1/2. Catalyzes the transfer of endogenously produced octanoic acid from octanoyl-acyl-carrier-protein onto the lipoyl domains of lipoate-dependent enzymes. Lipoyl-ACP can also act as a substrate although octanoyl-ACP is likely to be the physiological substrate. The chain is Octanoyltransferase from Aeromonas hydrophila subsp. hydrophila (strain ATCC 7966 / DSM 30187 / BCRC 13018 / CCUG 14551 / JCM 1027 / KCTC 2358 / NCIMB 9240 / NCTC 8049).